Consider the following 512-residue polypeptide: Cytochrome P450 84A4 (512 aa).

A helical transmembrane segment spans residues leucine 7–arginine 24. Cysteine 447 is a heme binding site.

The protein belongs to the cytochrome P450 family. Requires heme as cofactor. As to expression, expressed in seedlings, roots, stems and inflorescence nodes. Low or no expression in leaves, flowers, seeds and lignifying tissue.

It is found in the membrane. Functionally, cytochrome P450 involved in the production of catechol-substituted substrates needed for the arabidopyrones biosynthesis. Converts p-coumaraldehyde into caffealdehyde. This chain is Cytochrome P450 84A4 (CYP84A4), found in Arabidopsis thaliana (Mouse-ear cress).